Here is a 205-residue protein sequence, read N- to C-terminus: Thiamine-phosphate synthase (205 aa).

Residues 37–41 (QVREK) and Asn-69 contribute to the 4-amino-2-methyl-5-(diphosphooxymethyl)pyrimidine site. Residues Asp-70 and Asp-89 each contribute to the Mg(2+) site. 4-amino-2-methyl-5-(diphosphooxymethyl)pyrimidine is bound at residue Ser-108. 2-[(2R,5Z)-2-carboxy-4-methylthiazol-5(2H)-ylidene]ethyl phosphate is bound at residue 134–136 (TGS). Position 137 (Lys-137) interacts with 4-amino-2-methyl-5-(diphosphooxymethyl)pyrimidine. 2-[(2R,5Z)-2-carboxy-4-methylthiazol-5(2H)-ylidene]ethyl phosphate contacts are provided by residues Gly-165 and 185 to 186 (IS).

The protein belongs to the thiamine-phosphate synthase family. Mg(2+) is required as a cofactor.

It carries out the reaction 2-[(2R,5Z)-2-carboxy-4-methylthiazol-5(2H)-ylidene]ethyl phosphate + 4-amino-2-methyl-5-(diphosphooxymethyl)pyrimidine + 2 H(+) = thiamine phosphate + CO2 + diphosphate. It catalyses the reaction 2-(2-carboxy-4-methylthiazol-5-yl)ethyl phosphate + 4-amino-2-methyl-5-(diphosphooxymethyl)pyrimidine + 2 H(+) = thiamine phosphate + CO2 + diphosphate. The enzyme catalyses 4-methyl-5-(2-phosphooxyethyl)-thiazole + 4-amino-2-methyl-5-(diphosphooxymethyl)pyrimidine + H(+) = thiamine phosphate + diphosphate. It functions in the pathway cofactor biosynthesis; thiamine diphosphate biosynthesis; thiamine phosphate from 4-amino-2-methyl-5-diphosphomethylpyrimidine and 4-methyl-5-(2-phosphoethyl)-thiazole: step 1/1. Functionally, condenses 4-methyl-5-(beta-hydroxyethyl)thiazole monophosphate (THZ-P) and 2-methyl-4-amino-5-hydroxymethyl pyrimidine pyrophosphate (HMP-PP) to form thiamine monophosphate (TMP). The sequence is that of Thiamine-phosphate synthase from Clostridium botulinum (strain Langeland / NCTC 10281 / Type F).